Reading from the N-terminus, the 323-residue chain is tRNA dimethylallyltransferase (323 aa).

Residue 12–19 coordinates ATP; that stretch reads GPTAAGKT. 14-19 contacts substrate; sequence TAAGKT. Interaction with substrate tRNA regions lie at residues 37 to 40 and 161 to 165; these read DSAL and QRLIR.

Belongs to the IPP transferase family. In terms of assembly, monomer. The cofactor is Mg(2+).

It carries out the reaction adenosine(37) in tRNA + dimethylallyl diphosphate = N(6)-dimethylallyladenosine(37) in tRNA + diphosphate. Catalyzes the transfer of a dimethylallyl group onto the adenine at position 37 in tRNAs that read codons beginning with uridine, leading to the formation of N6-(dimethylallyl)adenosine (i(6)A). The sequence is that of tRNA dimethylallyltransferase from Pseudomonas entomophila (strain L48).